The chain runs to 54 residues: Secreted virulence factor MC69 (54 aa).

An N-terminal signal peptide occupies residues 1 to 16 (MKAAFVLALCASLASA). Cysteines 36 and 46 form a disulfide.

This sequence belongs to the MC69 virulence factor family.

The protein localises to the secreted. Its function is as follows. Secreted protein required for appressorial penetration of intact host epidermal cells and for pathogenicity. The chain is Secreted virulence factor MC69 from Pyricularia oryzae (strain 70-15 / ATCC MYA-4617 / FGSC 8958) (Rice blast fungus).